A 120-amino-acid polypeptide reads, in one-letter code: Natriuretic peptide (120 aa).

The signal sequence occupies residues 1–25; it reads MVGLSRLADGGLLLVLALLPLALDG. Positions 26–70 are excised as a propeptide; that stretch reads KPAPLEKAPMAPARIIPYLRPVGKESRAALDRMVPPEDGDSRRLE. A disulfide bridge links Cys81 with Cys97. Residues 110–120 constitute a propeptide that is removed on maturation; it reads ILPYLRPIRKE.

The protein belongs to the natriuretic peptide family. As to expression, expressed by the venom gland.

It localises to the secreted. Natriuretic peptide that dose-dependently induces the rapid relaxation of rat aortic strips phenylephrine-precontracted. Acts by stimulating cGMP production in a dose-dependent manner (by probably activating NPR1 and/or NPR2). May also show potent hypotensive effects. The polypeptide is Natriuretic peptide (Micrurus altirostris (Uruguayan coral snake)).